Reading from the N-terminus, the 278-residue chain is Asnovolin E/Chermesin D methyltransferase nvfJ (278 aa).

S-adenosyl-L-methionine is bound by residues 125–126 (DL), 152–153 (NI), and 153–154 (IL).

This sequence belongs to the class I-like SAM-binding methyltransferase superfamily. Homodimer.

The catalysed reaction is chermesin D + S-adenosyl-L-methionine = chermesin D methyl ester + S-adenosyl-L-homocysteine. It carries out the reaction asnovolin I + S-adenosyl-L-methionine = asnovolin K + S-adenosyl-L-homocysteine. The protein operates within secondary metabolite biosynthesis; terpenoid biosynthesis. In terms of biological role, methyltransferase; part of the gene cluster that mediates the biosynthesis of novofumigatonin, a heavily oxygenated meroterpenoid containing a unique orthoester moiety. The first step of the pathway is the synthesis of 3,5-dimethylorsellinic acid (DMOA) by the polyketide synthase nvfA via condensation of one acetyl-CoA starter unit with 3 malonyl-CoA units and 2 methylations. DMOA is then converted to farnesyl-DMOA by the farnesyltransferase nvfB. Epoxydation by FAD-dependent monooxygenase nvfK, followed by a protonation-initiated cyclization catalyzed by the terpene cyclase nvfL leads to the production of asnavolin H. The short chain dehydrogenase nvfC then as a 3-OH dehydrogenase of asnovolin H to yield chemesin D. There are two branches to synthesize asnovolin A from chemesin D. In one branch, chemesin D undergoes Baeyer-Villiger oxidation by nvfH, methylation by nvfJ, and enoyl reduction by the nvfM D enoylreductase that reduces the double bond between C-5'and C-6', to form respectively asnovolin I, asnovolin K, and asnovolin A. In the other branch, the methylation precedes the Baeyer-Villiger oxidation and the enoyl reduction to yield asnovolin A via the asnovolin J intermediate. Asnovolin A is further converted to fumigatonoid A by the Fe(II)/2-oxoglutarate-dependent dioxygenase nvfI that catalyzes an endoperoxidation reaction. The alpha/beta hydrolase nvfD then acts as an epimerase that converts fumigatonoid A to its C-5' epimer, which then undergoes spontaneous or nvfD-catalyzed lactonization. The following step utilizes the ketoreductase nvfG to produce fumigatonoid B. The dioxygenase nvfE further converts fumigatonoid B into fumigatonoid C. Finally the Fe(II)/2-oxoglutarate-dependent dioxygenase nvfF catalyzes two rounds of oxidation to transform fumigatonoid C into the end product, novofumigatonin A. The chain is Asnovolin E/Chermesin D methyltransferase nvfJ from Aspergillus novofumigatus (strain IBT 16806).